Here is a 439-residue protein sequence, read N- to C-terminus: MTARAIIIGAPRSGSGKTSVTIGILRALTRRGLKVRGAKSGPDYIDPGFHTAATGLSGVNLDSWAMPPSLLNALAAQQADDTDFVILESAMGLFDGIPAAPGRTGSAADLARLYGLPVLLVLDVSGQSTTAAAVAKGFATYDPDVRMAGVVLNRLGSERHRKLSGDAIEAIGLPVVGAILRDPTLNLPERHLGLVQAGEYDDLMAHLDRLADMAEKSLDLDAVMRLATPLAPAAGGFADALQPPGQRIALAEDGAFTFLYPHVAAYWRKAGAEIVPFSPLADEAPDDSCDVCWLPGGYPELHAGKLAAAETFKAGMARFAATKPIHGECGGFMVLGEALEDASGETHRMLGLLGHATSFAKRKMNLGYREARLRADCPLGAQGALIRGHEFHYAQMTATGNDEPLADLADGLGNPIGASGYRRGHVSGTFFHAIARASA.

Residues 247–439 (RIALAEDGAF…FFHAIARASA (193 aa)) form the GATase cobBQ-type domain. Cys329 (nucleophile) is an active-site residue.

Belongs to the CobB/CbiA family. Mg(2+) serves as cofactor.

It carries out the reaction hydrogenobyrinate + 2 L-glutamine + 2 ATP + 2 H2O = hydrogenobyrinate a,c-diamide + 2 L-glutamate + 2 ADP + 2 phosphate + 2 H(+). It participates in cofactor biosynthesis; adenosylcobalamin biosynthesis; cob(II)yrinate a,c-diamide from precorrin-2 (aerobic route): step 9/10. Catalyzes the ATP-dependent amidation of the two carboxylate groups at positions a and c of hydrogenobyrinate, using either L-glutamine or ammonia as the nitrogen source. This is Hydrogenobyrinate a,c-diamide synthase from Mesorhizobium japonicum (strain LMG 29417 / CECT 9101 / MAFF 303099) (Mesorhizobium loti (strain MAFF 303099)).